We begin with the raw amino-acid sequence, 263 residues long: 4-hydroxy-tetrahydrodipicolinate reductase (263 aa).

Residues 8–13, Asp-34, 99–101, and 125–128 contribute to the NAD(+) site; these read GACGRM, GTT, and SPNY. Residue His-157 is the Proton donor/acceptor of the active site. (S)-2,3,4,5-tetrahydrodipicolinate is bound at residue His-158. Residue Lys-161 is the Proton donor of the active site. 167–168 contributes to the (S)-2,3,4,5-tetrahydrodipicolinate binding site; sequence GT.

This sequence belongs to the DapB family.

It localises to the cytoplasm. It catalyses the reaction (S)-2,3,4,5-tetrahydrodipicolinate + NAD(+) + H2O = (2S,4S)-4-hydroxy-2,3,4,5-tetrahydrodipicolinate + NADH + H(+). It carries out the reaction (S)-2,3,4,5-tetrahydrodipicolinate + NADP(+) + H2O = (2S,4S)-4-hydroxy-2,3,4,5-tetrahydrodipicolinate + NADPH + H(+). Its pathway is amino-acid biosynthesis; L-lysine biosynthesis via DAP pathway; (S)-tetrahydrodipicolinate from L-aspartate: step 4/4. Its function is as follows. Catalyzes the conversion of 4-hydroxy-tetrahydrodipicolinate (HTPA) to tetrahydrodipicolinate. The polypeptide is 4-hydroxy-tetrahydrodipicolinate reductase (Methanosarcina barkeri (strain Fusaro / DSM 804)).